A 59-amino-acid polypeptide reads, in one-letter code: Large ribosomal subunit protein uL30 (59 aa).

This sequence belongs to the universal ribosomal protein uL30 family. Part of the 50S ribosomal subunit.

In Photorhabdus laumondii subsp. laumondii (strain DSM 15139 / CIP 105565 / TT01) (Photorhabdus luminescens subsp. laumondii), this protein is Large ribosomal subunit protein uL30.